The chain runs to 533 residues: WUSCHEL-related homeobox 7 (533 aa).

Disordered stretches follow at residues 1 to 74 (MASS…NPRP) and 125 to 212 (SKNK…STQA). The span at 28 to 41 (AGSPPSLLSGSSAG) shows a compositional bias: low complexity. The segment covering 59–68 (GEERVPDPKP) has biased composition (basic and acidic residues). The homeobox; WUS-type DNA-binding region spans 65–129 (DPKPRWNPRP…NRKSRSKNKL (65 aa)). Gly residues predominate over residues 132-143 (GGTGRAGLGLGG). A compositionally biased stretch (pro residues) spans 161 to 174 (FTPPPPILPAPQPV). Over residues 175–202 (QPQQQLVSPVAAPTSSSSSSSDRSSGSS) the composition is skewed to low complexity.

It belongs to the WUS homeobox family.

It is found in the nucleus. Its function is as follows. Transcription factor which may be involved in developmental processes. In Oryza sativa subsp. japonica (Rice), this protein is WUSCHEL-related homeobox 7 (WOX7).